A 582-amino-acid chain; its full sequence is Semenogelin-2 (582 aa).

Residues 1 to 23 (MKSIILFVLSLLLILEKQAAVMG) form the signal peptide. Disordered regions lie at residues 25-62 (KGGSKGQLSSGSSRFPHRHRSQHYSGQKDKQHTESKGS), 131-156 (KGGQVHHGTQNPSQDQGNSPSGKGIF), 173-192 (KEQASASGAQKGRTQGGSQS), 272-477 (NLNQ…EQRQ), and 502-554 (VEGK…SGAH). The span at 50 to 59 (GQKDKQHTES) shows a compositional bias: basic and acidic residues. 2 stretches are compositionally biased toward polar residues: residues 137-151 (HGTQNPSQDQGNSPS) and 174-192 (EQASASGAQKGRTQGGSQS). A compositionally biased stretch (basic and acidic residues) spans 292–310 (RTEERQLNHGEKSVQKDVS). A compositionally biased stretch (polar residues) spans 325–335 (KSQNQVTIPSQ). Over residues 336–345 (DQEHGHKENK) the composition is skewed to basic and acidic residues. Polar residues predominate over residues 385 to 395 (KSQNQVTIPSQ). Basic and acidic residues predominate over residues 396 to 405 (DQEHGHKENK). Residues 445-455 (KSQNQVTIPSQ) are compositionally biased toward polar residues. Basic and acidic residues predominate over residues 456–465 (DQEHGHKENK). Composition is skewed to polar residues over residues 466–477 (ISYQSSSTEQRQ) and 506–529 (SQIQTPNPNQGQWSGQNAKGNSGK). The segment covering 537 to 546 (LLSHEQEGRY) has biased composition (basic and acidic residues).

It belongs to the semenogelin family. In terms of assembly, interacts with SERPINA5.

The protein localises to the secreted. Its function is as follows. Participates in the formation of a gel matrix (sperm coagulum) entrapping the accessory gland secretions and ejaculated spermatozoa. This chain is Semenogelin-2 (SEMG2), found in Macaca nemestrina (Pig-tailed macaque).